We begin with the raw amino-acid sequence, 1340 residues long: Iron-sulfur cluster assembly protein SufD (1340 aa).

Positions 477–487 (NSLKHNNNNTK) are enriched in low complexity. Disordered stretches follow at residues 477 to 498 (NSLK…ERSS), 723 to 743 (HGKD…NYLN), 765 to 794 (NVST…QSTV), 835 to 865 (EKNE…GEKK), and 992 to 1055 (NIPT…NNIQ). Positions 723 to 734 (HGKDNTQHDDKN) are enriched in basic and acidic residues. Positions 782-794 (NPDTETNNEQSTV) are enriched in polar residues. The span at 1022 to 1037 (DNLLQNDQATNSNVEI) shows a compositional bias: polar residues.

This sequence belongs to the iron-sulfur cluster assembly SufBD family. In terms of assembly, component of a complex composed of SufB, SufC and SufD in a stoichiometric ratio of 1:2:1. Interacts with SufB. Interacts with SufC; the interaction enhances the ATPase activity of SufC.

It localises to the plastid. The protein localises to the apicoplast. It participates in cofactor biosynthesis; iron-sulfur cluster biosynthesis. Participates in the sulfur mobilization (SUF) pathway for iron-sulfur (Fe-S) cluster biogenesis. As part of a complex consisting of SufB-SufC(2)-SufD, involved in assembly of [4Fe-4S] clusters. Enhances the ATPase activity of SufC. In Plasmodium berghei (strain Anka), this protein is Iron-sulfur cluster assembly protein SufD.